The chain runs to 156 residues: Sperm acrosome-associated protein 5 (156 aa).

The signal sequence occupies residues 1–18; it reads MQVSGTIVVILMAANVEA. The C-type lysozyme domain occupies 19 to 147; that stretch reads KIYERCDLAK…SEWLRGCHMN (129 aa). Cystine bridges form between C24–C144, C48–C132, C82–C97, and C93–C111. Residue E53 is part of the active site.

Belongs to the glycosyl hydrolase 22 family.

The protein localises to the secreted. The enzyme catalyses Hydrolysis of (1-&gt;4)-beta-linkages between N-acetylmuramic acid and N-acetyl-D-glucosamine residues in a peptidoglycan and between N-acetyl-D-glucosamine residues in chitodextrins.. In Bos taurus (Bovine), this protein is Sperm acrosome-associated protein 5 (SPACA5).